We begin with the raw amino-acid sequence, 271 residues long: Sec-independent protein translocase protein TatC (271 aa).

6 helical membrane passes run 35–55 (IIWTFVYIAAGFGVCWWWHEQ), 93–113 (AFIAGLFVASPFVLYQVWLFI), 124–144 (YVLPFMFSTVLLFLGGGVFGY), 178–198 (IILGLGIVFEMPILVFFLALM), 213–233 (SILVIFVIAAIITPTTDIMNM), and 234–254 (CVFAAPMILLYILSIGVAFLV).

It belongs to the TatC family. In terms of assembly, forms a complex with TatA.

The protein localises to the cell inner membrane. Functionally, part of the twin-arginine translocation (Tat) system that transports large folded proteins containing a characteristic twin-arginine motif in their signal peptide across membranes. The polypeptide is Sec-independent protein translocase protein TatC (Koribacter versatilis (strain Ellin345)).